Reading from the N-terminus, the 329-residue chain is Synaptonemal complex central element protein 1 (329 aa).

Residues 1 to 33 (MATRPQPLSVEPEGSADLLHGPEGARGRRGSTQ) are disordered. Coiled coils occupy residues 28–168 (RRGS…ETLM) and 194–294 (KEQL…ILAQ). Positions 295–329 (IQSTQKEEDSSWRTASPKPLEAHKETVQERPSSRT) are disordered. The span at 314-329 (LEAHKETVQERPSSRT) shows a compositional bias: basic and acidic residues.

It belongs to the SYCE family. Homodimer. Found in a complex with SYCP1 and SYCE2. Interacts with SYCP1, SYCE2 and SYCE3. Interacts with SIX6OS1.

Its subcellular location is the nucleus. The protein resides in the chromosome. Its function is as follows. Major component of the transverse central element of synaptonemal complexes (SCS), formed between homologous chromosomes during meiotic prophase. Requires SYCP1 in order to be incorporated into the central element. May have a role in the synaptonemal complex assembly, stabilization and recombination. The chain is Synaptonemal complex central element protein 1 (Syce1) from Rattus norvegicus (Rat).